The chain runs to 236 residues: MGHESPTIEFLGLTFSQSNLLMVTVASVIVFLIAVLCTRTLAMKPSGAQNFIEWVLDFVKGLVNSNMDWKTGGRFLTLGVTLLMYIFVSNMLGLPFAIVIDHNLWWKSPTADPAITLTLAVMVVVLSHYYGIKMRGFSAYTKDYFKPMAFLFPLKIIEEFANTLTLGLRLYGNIYAGEILLSLLAGLATTGFLGTIGAAIPMLLWQGFSIFVGAIQAFIFTMLTMVYLSHKVSSDH.

The next 5 helical transmembrane spans lie at 18–38 (SNLLMVTVASVIVFLIAVLCT), 80–100 (VTLLMYIFVSNMLGLPFAIVI), 112–132 (DPAITLTLAVMVVVLSHYYGI), 179–199 (ILLSLLAGLATTGFLGTIGAA), and 200–220 (IPMLLWQGFSIFVGAIQAFIF).

The protein belongs to the ATPase A chain family. F-type ATPases have 2 components, CF(1) - the catalytic core - and CF(0) - the membrane proton channel. CF(1) has five subunits: alpha(3), beta(3), gamma(1), delta(1), epsilon(1). CF(0) has three main subunits: a(1), b(2) and c(9-12). The alpha and beta chains form an alternating ring which encloses part of the gamma chain. CF(1) is attached to CF(0) by a central stalk formed by the gamma and epsilon chains, while a peripheral stalk is formed by the delta and b chains.

The protein localises to the cell membrane. In terms of biological role, key component of the proton channel; it plays a direct role in the translocation of protons across the membrane. The protein is ATP synthase subunit a of Priestia megaterium (strain ATCC 12872 / QMB1551) (Bacillus megaterium).